Consider the following 258-residue polypeptide: Small ribosomal subunit protein uS3 (258 aa).

Residues 43 to 111 (IRKLMSTGLE…QVQLNILEVK (69 aa)) enclose the KH type-2 domain. The tract at residues 217 to 258 (AREQASAAPRARGRADRPRGRRDEGAAPQQAAAPAATTGTEA) is disordered. Basic and acidic residues predominate over residues 229–241 (GRADRPRGRRDEG). Residues 242–258 (AAPQQAAAPAATTGTEA) are compositionally biased toward low complexity.

The protein belongs to the universal ribosomal protein uS3 family. As to quaternary structure, part of the 30S ribosomal subunit. Forms a tight complex with proteins S10 and S14.

Functionally, binds the lower part of the 30S subunit head. Binds mRNA in the 70S ribosome, positioning it for translation. This Beutenbergia cavernae (strain ATCC BAA-8 / DSM 12333 / CCUG 43141 / JCM 11478 / NBRC 16432 / NCIMB 13614 / HKI 0122) protein is Small ribosomal subunit protein uS3.